The primary structure comprises 329 residues: Probable aryl-alcohol dehydrogenase AAD4 (329 aa).

The active-site Proton donor is the tyrosine 30. A substrate-binding site is contributed by histidine 105. Position 190 to 200 (190 to 200) interacts with NADP(+); the sequence is DVMGGGRFQSK.

Belongs to the aldo/keto reductase family. Aldo/keto reductase 2 subfamily.

This Saccharomyces cerevisiae (strain ATCC 204508 / S288c) (Baker's yeast) protein is Probable aryl-alcohol dehydrogenase AAD4 (AAD4).